The sequence spans 156 residues: Probable cyclic pyranopterin monophosphate synthase (156 aa).

Residues 73 to 75 (LCH) and 109 to 110 (ME) contribute to the substrate site. Asp124 is an active-site residue.

This sequence belongs to the MoaC family. In terms of assembly, homohexamer; trimer of dimers.

It carries out the reaction (8S)-3',8-cyclo-7,8-dihydroguanosine 5'-triphosphate = cyclic pyranopterin phosphate + diphosphate. Its pathway is cofactor biosynthesis; molybdopterin biosynthesis. Catalyzes the conversion of (8S)-3',8-cyclo-7,8-dihydroguanosine 5'-triphosphate to cyclic pyranopterin monophosphate (cPMP). The protein is Probable cyclic pyranopterin monophosphate synthase of Pyrococcus furiosus (strain ATCC 43587 / DSM 3638 / JCM 8422 / Vc1).